A 453-amino-acid chain; its full sequence is Ribulose bisphosphate carboxylase large chain (453 aa).

The propeptide occupies 1 to 2 (MS). Position 3 is an N-acetylproline (Pro-3). Lys-14 carries the post-translational modification N6,N6,N6-trimethyllysine. Residues Asn-123 and Thr-173 each contribute to the substrate site. Lys-175 functions as the Proton acceptor in the catalytic mechanism. Lys-177 is a substrate binding site. Mg(2+) contacts are provided by Lys-201, Asp-203, and Glu-204. Position 201 is an N6-carboxylysine (Lys-201). The Proton acceptor role is filled by His-294. Substrate is bound by residues Arg-295, His-327, and Ser-379.

The protein belongs to the RuBisCO large chain family. Type I subfamily. In terms of assembly, heterohexadecamer of 8 large chains and 8 small chains; disulfide-linked. The disulfide link is formed within the large subunit homodimers. Mg(2+) serves as cofactor. In terms of processing, the disulfide bond which can form in the large chain dimeric partners within the hexadecamer appears to be associated with oxidative stress and protein turnover.

The protein localises to the plastid. Its subcellular location is the chloroplast. The enzyme catalyses 2 (2R)-3-phosphoglycerate + 2 H(+) = D-ribulose 1,5-bisphosphate + CO2 + H2O. The catalysed reaction is D-ribulose 1,5-bisphosphate + O2 = 2-phosphoglycolate + (2R)-3-phosphoglycerate + 2 H(+). Functionally, ruBisCO catalyzes two reactions: the carboxylation of D-ribulose 1,5-bisphosphate, the primary event in carbon dioxide fixation, as well as the oxidative fragmentation of the pentose substrate in the photorespiration process. Both reactions occur simultaneously and in competition at the same active site. The polypeptide is Ribulose bisphosphate carboxylase large chain (Galium parisiense (Wall bedstraw)).